The primary structure comprises 207 residues: Ribonuclease HII (207 aa).

The RNase H type-2 domain maps to 18 to 207; that stretch reads GLVAGVDEAG…VAEVLREALP (190 aa). A divalent metal cation contacts are provided by D24, E25, and D116.

Belongs to the RNase HII family. Mn(2+) serves as cofactor. It depends on Mg(2+) as a cofactor.

Its subcellular location is the cytoplasm. The catalysed reaction is Endonucleolytic cleavage to 5'-phosphomonoester.. Endonuclease that specifically degrades the RNA of RNA-DNA hybrids. The sequence is that of Ribonuclease HII from Albidiferax ferrireducens (strain ATCC BAA-621 / DSM 15236 / T118) (Rhodoferax ferrireducens).